The chain runs to 756 residues: Zinc finger and BTB domain-containing protein 49 (756 aa).

The BTB domain occupies 25–91 (CDCMLVVRGV…MYTSRLDLNQ (67 aa)). Disordered regions lie at residues 176-197 (APSANFSRPTEVSKPDAAGGSC), 226-290 (PSQV…LSEP), and 311-379 (SQQS…PSQA). The span at 226–242 (PSQVPATQQPLTRSAST) shows a compositional bias: polar residues. Composition is skewed to basic and acidic residues over residues 319-341 (SHPEPDNGLARREESAAKEDAVE) and 348-365 (AEEKGRGELGPESSREEE). 7 consecutive C2H2-type zinc fingers follow at residues 386 to 408 (YACELCGKPFKHPSNLELHKRSH), 414 to 436 (FECNICGKHFSQAGNLQTHLRRH), 442 to 464 (YICEICGKRFAASGDVQRHIIIH), 470 to 492 (HLCDTCGRGFSNFSNLKEHKKTH), 498 to 520 (FTCDECGKSFNMQRKLVKHRVRH), 526 to 548 (YSCPACGKCFGGSGDLRRHVRTH), and 554 to 576 (YSCEVCSKCFTRSAVLRRHKRMH).

The protein belongs to the krueppel C2H2-type zinc-finger protein family. In terms of assembly, interacts with EP300, KAT5/Tip60 and ZBTB17. The interaction with EP300 is direct and leads to synergistic induction of CDKN1A. On the CDKN1A promoter, forms a complex with ZBTB17; this interaction leads to additive CDKN1A transactivation. The interaction with ZBTB17 may block ZBTB17 repressor activity. As to expression, widely expressed, with highest levels in white adipose tissue and kidney, intermediate levels in brain, liver and heart, and lowest levels in spleen, brown adipose tissue and muscle.

The protein resides in the cytoplasm. The protein localises to the nucleus. Its function is as follows. Transcription factor. Inhibits cell proliferation by activating either CDKN1A/p21 transcription or RB1 transcription. The protein is Zinc finger and BTB domain-containing protein 49 (Zbtb49) of Mus musculus (Mouse).